A 171-amino-acid chain; its full sequence is Transcription elongation factor GreB (171 aa).

Positions Lys53–Ile75 form a coiled coil.

The protein belongs to the GreA/GreB family. GreB subfamily.

Functionally, necessary for efficient RNA polymerase transcription elongation past template-encoded arresting sites. The arresting sites in DNA have the property of trapping a certain fraction of elongating RNA polymerases that pass through, resulting in locked ternary complexes. Cleavage of the nascent transcript by cleavage factors such as GreA or GreB allows the resumption of elongation from the new 3'terminus. GreB releases sequences of up to 9 nucleotides in length. The chain is Transcription elongation factor GreB from Yersinia pestis.